A 576-amino-acid chain; its full sequence is Sulfite reductase [NADPH] hemoprotein beta-component (576 aa).

[4Fe-4S] cluster contacts are provided by C439, C445, C485, and C489. C489 contacts siroheme.

Belongs to the nitrite and sulfite reductase 4Fe-4S domain family. As to quaternary structure, alpha(8)-beta(8). The alpha component is a flavoprotein, the beta component is a hemoprotein. The cofactor is siroheme. [4Fe-4S] cluster serves as cofactor.

It catalyses the reaction hydrogen sulfide + 3 NADP(+) + 3 H2O = sulfite + 3 NADPH + 4 H(+). Its pathway is sulfur metabolism; hydrogen sulfide biosynthesis; hydrogen sulfide from sulfite (NADPH route): step 1/1. Component of the sulfite reductase complex that catalyzes the 6-electron reduction of sulfite to sulfide. This is one of several activities required for the biosynthesis of L-cysteine from sulfate. This chain is Sulfite reductase [NADPH] hemoprotein beta-component, found in Aliivibrio fischeri (strain ATCC 700601 / ES114) (Vibrio fischeri).